We begin with the raw amino-acid sequence, 461 residues long: Cysteine--tRNA ligase (461 aa).

A Zn(2+)-binding site is contributed by C28. Residues 30–40 carry the 'HIGH' region motif; that stretch reads ITVYDLCHIGH. Residues C209, H234, and E238 each contribute to the Zn(2+) site. The 'KMSKS' region signature appears at 266 to 270; it reads KMSKS. K269 lines the ATP pocket.

This sequence belongs to the class-I aminoacyl-tRNA synthetase family. Monomer. Zn(2+) serves as cofactor.

The protein localises to the cytoplasm. The enzyme catalyses tRNA(Cys) + L-cysteine + ATP = L-cysteinyl-tRNA(Cys) + AMP + diphosphate. This chain is Cysteine--tRNA ligase, found in Escherichia coli O127:H6 (strain E2348/69 / EPEC).